The sequence spans 243 residues: Pyridoxine 5'-phosphate synthase (243 aa).

Asn-7 lines the 3-amino-2-oxopropyl phosphate pocket. 9-10 (DH) contributes to the 1-deoxy-D-xylulose 5-phosphate binding site. Position 18 (Arg-18) interacts with 3-amino-2-oxopropyl phosphate. Residue His-43 is the Proton acceptor of the active site. 1-deoxy-D-xylulose 5-phosphate-binding residues include Arg-45 and His-50. Catalysis depends on Glu-70, which acts as the Proton acceptor. Thr-100 serves as a coordination point for 1-deoxy-D-xylulose 5-phosphate. His-191 (proton donor) is an active-site residue. Residues Gly-192 and 213-214 (GH) each bind 3-amino-2-oxopropyl phosphate.

It belongs to the PNP synthase family. As to quaternary structure, homooctamer; tetramer of dimers.

It localises to the cytoplasm. It carries out the reaction 3-amino-2-oxopropyl phosphate + 1-deoxy-D-xylulose 5-phosphate = pyridoxine 5'-phosphate + phosphate + 2 H2O + H(+). Its pathway is cofactor biosynthesis; pyridoxine 5'-phosphate biosynthesis; pyridoxine 5'-phosphate from D-erythrose 4-phosphate: step 5/5. In terms of biological role, catalyzes the complicated ring closure reaction between the two acyclic compounds 1-deoxy-D-xylulose-5-phosphate (DXP) and 3-amino-2-oxopropyl phosphate (1-amino-acetone-3-phosphate or AAP) to form pyridoxine 5'-phosphate (PNP) and inorganic phosphate. This is Pyridoxine 5'-phosphate synthase from Magnetococcus marinus (strain ATCC BAA-1437 / JCM 17883 / MC-1).